Here is a 163-residue protein sequence, read N- to C-terminus: Phosphopantetheine adenylyltransferase (163 aa).

Thr10 serves as a coordination point for substrate. ATP-binding positions include 10–11 and His18; that span reads TF. Residues Lys42, Leu75, and Arg89 each coordinate substrate. Residues 90 to 92, Glu100, and 125 to 131 contribute to the ATP site; these read GVR and YTYVASS.

It belongs to the bacterial CoaD family. Homohexamer. Mg(2+) is required as a cofactor.

It localises to the cytoplasm. The enzyme catalyses (R)-4'-phosphopantetheine + ATP + H(+) = 3'-dephospho-CoA + diphosphate. It functions in the pathway cofactor biosynthesis; coenzyme A biosynthesis; CoA from (R)-pantothenate: step 4/5. Reversibly transfers an adenylyl group from ATP to 4'-phosphopantetheine, yielding dephospho-CoA (dPCoA) and pyrophosphate. The protein is Phosphopantetheine adenylyltransferase of Pelodictyon phaeoclathratiforme (strain DSM 5477 / BU-1).